The following is a 420-amino-acid chain: Mannose-1-phosphate guanylyltransferase regulatory subunit alpha (420 aa).

The segment at 2–251 is substrate-binding domain; it reads LKAVILIGGP…DGIWSQIKSA (250 aa). Residues E85 and Q247 each coordinate GDP-alpha-D-mannose. The segment at 273-420 is hexapeptide repeat domain; it reads LAKHTPGGPW…SRSFTNQIIL (148 aa). Residues 356-384 form a C-loop region; it reads TPSDPNPNDPRARMDSESLFKDGKLLPAI.

This sequence belongs to the transferase hexapeptide repeat family. As to quaternary structure, component of the GMPPA-GMPPB mannose-1-phosphate guanylyltransferase complex composed of 4 GMPPA subunits and 8 GMPPB subunits; the complex is organized into three layers, a central layer made up of 2 GMPPA dimers sandwiched between two layers each made up of 2 GMPPB dimers. In terms of tissue distribution, expressed in fibroblasts (at protein level).

The protein localises to the cytoplasm. In terms of biological role, regulatory subunit of the GMPPA-GMPPB mannose-1-phosphate guanylyltransferase complex; reduces the catalytic activity of GMPPB when part of the complex. Mediates allosteric feedback inhibition of GMPPB catalytic activity upon binding GDP-alpha-D-mannose. Together with GMPPB regulates GDP-alpha-D-mannose levels. In Homo sapiens (Human), this protein is Mannose-1-phosphate guanylyltransferase regulatory subunit alpha.